The chain runs to 126 residues: Glycine cleavage system H protein (126 aa).

The Lipoyl-binding domain maps to 22 to 104; sequence VATIGITEYA…YEKAWMVKIE (83 aa). Residue lysine 63 is modified to N6-lipoyllysine.

Belongs to the GcvH family. The glycine cleavage system is composed of four proteins: P, T, L and H. It depends on (R)-lipoate as a cofactor.

The glycine cleavage system catalyzes the degradation of glycine. The H protein shuttles the methylamine group of glycine from the P protein to the T protein. Its function is as follows. Is also involved in protein lipoylation via its role as an octanoyl/lipoyl carrier protein intermediate. This is Glycine cleavage system H protein from Staphylococcus epidermidis (strain ATCC 35984 / DSM 28319 / BCRC 17069 / CCUG 31568 / BM 3577 / RP62A).